The following is a 359-amino-acid chain: 3-dehydroquinate synthase (359 aa).

NAD(+) contacts are provided by residues 71-76, 105-109, 129-130, Lys142, Lys151, and 169-172; these read DGEQFK, GVIGD, TT, and CLHT. Residues Glu184, His247, and His264 each contribute to the Zn(2+) site.

The protein belongs to the sugar phosphate cyclases superfamily. Dehydroquinate synthase family. The cofactor is Co(2+). Requires Zn(2+) as cofactor. NAD(+) serves as cofactor.

The protein resides in the cytoplasm. It catalyses the reaction 7-phospho-2-dehydro-3-deoxy-D-arabino-heptonate = 3-dehydroquinate + phosphate. It functions in the pathway metabolic intermediate biosynthesis; chorismate biosynthesis; chorismate from D-erythrose 4-phosphate and phosphoenolpyruvate: step 2/7. Functionally, catalyzes the conversion of 3-deoxy-D-arabino-heptulosonate 7-phosphate (DAHP) to dehydroquinate (DHQ). The protein is 3-dehydroquinate synthase of Shewanella putrefaciens (strain CN-32 / ATCC BAA-453).